Reading from the N-terminus, the 486-residue chain is Hexosaminidase D (486 aa).

Glutamate 149 serves as the catalytic Proton donor.

The protein belongs to the glycosyl hydrolase 20 family. As to quaternary structure, homodimer; disulfide-linked. Expressed in synovial fibroblasts and synovial membranes.

Its subcellular location is the cytoplasm. The protein localises to the nucleus. It localises to the extracellular vesicle. The enzyme catalyses Hydrolysis of terminal non-reducing N-acetyl-D-hexosamine residues in N-acetyl-beta-D-hexosaminides.. Its activity is regulated as follows. Inhibited by O-(2-acetamido-2-deoxy-D-glucopyranosylidene)amino N-phenylcarbamate (PUGNAc). Inhibited by galacto-NAG-thiazoline. In terms of biological role, has hexosaminidase activity. Responsible for the cleavage of the monosaccharides N-acetylglucosamine (GlcNAc) and N-acetylgalactosamine (GalNAc) from cellular substrates. Has a preference for galactosaminide over glucosaminide substrates. The sequence is that of Hexosaminidase D from Homo sapiens (Human).